We begin with the raw amino-acid sequence, 203 residues long: Interferon type B (203 aa).

The N-terminal stretch at 1 to 27 (MTANHQSPGMHSILLLLLLPALTTTFS) is a signal peptide. 2 cysteine pairs are disulfide-bonded: Cys28–Cys125 and Cys57–Cys164. Asn37 and Asn160 each carry an N-linked (GlcNAc...) asparagine glycan.

This sequence belongs to the alpha/beta interferon family.

The protein resides in the secreted. Has antiviral activities. The chain is Interferon type B (IFNB) from Gallus gallus (Chicken).